Reading from the N-terminus, the 481-residue chain is Cholesterol 16,22-dihydroxylase CYP90G4 (481 aa).

The helical transmembrane segment at 4-24 threads the bilayer; sequence SYLSFFVLSSILVLTLIFFFM. C426 is a binding site for heme.

It belongs to the cytochrome P450 family. Mainly expressed in leaves and seed pods and, at low levels, in flowers and stems.

The protein resides in the membrane. It functions in the pathway steroid metabolism; cholesterol metabolism. Involved in the biosynthesis of spiroketal steroid and saponin natural products from cholesterol such as diosgenin and analogs (e.g. furostanol and spirostanol), plant defense compounds used as main precursors for the industrial production of steroid hormones. During the 5,6-spiroketalization of cholesterol, catalyzes the hydroxylation of cholesterol to form 16S,22S-dihydroxycholesterol and, possibly, the subsequent conversion of 16S,22S-dihydroxycholesterol into 16-oxo-22-hydroxy-cholesterol and 16-hydroxy-22-oxo-cholesterol. 16-hydroxy-22-oxo-cholesterol submit a spontaneous reaction leading to the production of furostanol-type steroid diastereomers, precursors of diosgenin. This Trigonella foenum-graecum (Fenugreek) protein is Cholesterol 16,22-dihydroxylase CYP90G4.